Reading from the N-terminus, the 449-residue chain is Asparagine--tRNA ligase (449 aa).

This sequence belongs to the class-II aminoacyl-tRNA synthetase family. As to quaternary structure, homodimer.

The protein localises to the cytoplasm. The enzyme catalyses tRNA(Asn) + L-asparagine + ATP = L-asparaginyl-tRNA(Asn) + AMP + diphosphate + H(+). The protein is Asparagine--tRNA ligase of Deinococcus geothermalis (strain DSM 11300 / CIP 105573 / AG-3a).